Reading from the N-terminus, the 559-residue chain is Peptidyl-prolyl isomerase cwc27 (559 aa).

The 174-residue stretch at 11 to 184 (PTASATLHTT…YPVKVVSCEV (174 aa)) folds into the PPIase cyclophilin-type domain. 3 disordered regions span residues 201 to 395 (ATAP…GFSS), 413 to 449 (ESAD…EDEE), and 518 to 559 (PRER…REKP). A compositionally biased stretch (basic and acidic residues) spans 261 to 273 (APKKTSPEAEQQT). Over residues 305–319 (LPDPESPARSPPQSP) the composition is skewed to pro residues. Composition is skewed to polar residues over residues 384–394 (GSSTNGVTGFS) and 425–442 (TSIS…AKSN).

This sequence belongs to the cyclophilin-type PPIase family. CWC27 subfamily. Associated with the spliceosome.

The protein resides in the cytoplasm. It localises to the nucleus. It catalyses the reaction [protein]-peptidylproline (omega=180) = [protein]-peptidylproline (omega=0). PPIases accelerate the folding of proteins. It catalyzes the cis-trans isomerization of proline imidic peptide bonds in oligopeptides. Involved in pre-mRNA splicing. The sequence is that of Peptidyl-prolyl isomerase cwc27 (cwc27) from Aspergillus fumigatus (strain ATCC MYA-4609 / CBS 101355 / FGSC A1100 / Af293) (Neosartorya fumigata).